The following is an 83-amino-acid chain: High-potential iron-sulfur protein (83 aa).

[4Fe-4S] cluster is bound by residues cysteine 43, cysteine 46, cysteine 61, and cysteine 75.

It belongs to the high-potential iron-sulfur protein (HiPIP) family. Homodimer.

The protein resides in the periplasm. Its function is as follows. Specific class of high-redox-potential 4Fe-4S ferredoxins. Functions in anaerobic electron transport in most purple and in some other photosynthetic bacteria and in at least one genus (Paracoccus) of halophilic, denitrifying bacteria. The protein is High-potential iron-sulfur protein (hip) of Marichromatium gracile (Chromatium gracile).